We begin with the raw amino-acid sequence, 476 residues long: Ataxin-10 (476 aa).

Omega-N-methylarginine is present on Arg-10. 2 positions are modified to phosphoserine: Ser-13 and Ser-78. A Phosphothreonine modification is found at Thr-83. Ser-431 carries the post-translational modification Phosphoserine.

It belongs to the ataxin-10 family. As to quaternary structure, homooligomer. Interacts with GNB2. Interacts with IQCB1. Interacts with OGT. Post-translationally, polyubiquitinated. Phosphorylation at Ser-13 by AURKB promotes the association of ATXN10 with PLK1. Phosphorylation at Ser-78 and Thr-83 by PLK1 may play a role in the regulation of cytokinesis and may stimulate the proteasome-mediated degradation of ATXN10.

The protein localises to the cytoplasm. It localises to the perinuclear region. It is found in the midbody. The protein resides in the cytoskeleton. Its subcellular location is the cilium basal body. The protein localises to the microtubule organizing center. It localises to the centrosome. It is found in the centriole. Its function is as follows. May play a role in the regulation of cytokinesis. May play a role in signaling by stimulating protein glycosylation. Induces neuritogenesis by activating the Ras-MAP kinase pathway and is necessary for the survival of cerebellar neurons. Does not appear to play a major role in ciliogenesis. In Pongo abelii (Sumatran orangutan), this protein is Ataxin-10 (ATXN10).